The sequence spans 548 residues: MKKVTAMLFSMAVGLNAVSMAAKAKASEEQETDVLLIGGGIMSATLGTYLRELEPEWSMTMVERLEGVAQESSNGWNNAGTGHSALMELNYTPQNADGSISIEKAVAINEAFQISRQFWAHQVERGVLRTPRSFINTVPHMSFVWGEDNVNFLRARYAALQQSSLFRGMRYSEDHAQIKEWAPLVMEGRDPQQKVAATRTEIGTDVNYGEITRQLIASLQKKSNFSLQLSSEVRALKRNDDNTWTVTVADLKNGTAQNIRAKFVFIGAGGAALKLLQESGIPEAKDYAGFPVGGQFLVSENPDVVNHHLAKVYGKASVGAPPMSVPHIDTRVLDGKRVVLFGPFATFSTKFLKNGSLWDLMSSTTTSNVMPMMHVGLDNFDLVKYLVSQVMLSEEDRFEALKEYYPQAKKEDWRLWQAGQRVQIIKRDAEKGGVLRLGTEVVSDQQGTIAALLGASPGASTAAPIMLDLLEKVFGDRVSSPQWQATLKAIVPSYGRKLNGDVAATERELQYTSEVLGLKYDKPQAADSTPKPQLKPQPVQKEVADIAL.

The interval 521–548 is disordered; sequence DKPQAADSTPKPQLKPQPVQKEVADIAL. The segment covering 530–541 has biased composition (low complexity); it reads PKPQLKPQPVQK.

It belongs to the MQO family. Requires FAD as cofactor.

It carries out the reaction (S)-malate + a quinone = a quinol + oxaloacetate. The protein operates within carbohydrate metabolism; tricarboxylic acid cycle; oxaloacetate from (S)-malate (quinone route): step 1/1. The chain is Probable malate:quinone oxidoreductase from Escherichia coli O139:H28 (strain E24377A / ETEC).